The sequence spans 317 residues: Probable methyltransferase tdiE (317 aa).

Belongs to the methyltransferase superfamily. LaeA methyltransferase family.

It participates in secondary metabolite biosynthesis. Its function is as follows. Probable methyltransferase; part of the gene cluster that mediates the biosynthesis of terrequinone A, an antitumor agent. The first step in the biosynthetic pathway for terrequinone A is formation of indole pyruvic acid (IPA) from L-tryptophan by the aminotransferase tdiD. The nonribosomal peptide synthase tdiA then immediately converts unstable IPA to didemethylasterriquinone D (DDAQ D), via condensation of 2 IPA molecules. The symmetric connectivity of the 2 IPA molecules is thought to arise by head-to-tail dual Claisen condensations facilitated by the TE domain. TdiB then catalyzes reverse prenylation by transferring dimethylallyl diphosphate to carbon atom 2' of DDAQ D, to yield asterriquinone C-1. Finally, tdiC and tdiE enzymes robustly convert asterriquinone C-1 to terrequinone A via a transformation involving regular prenylation at carbon atom 5, which requires elimination of the hydroxy group on C-5. This Emericella nidulans (strain FGSC A4 / ATCC 38163 / CBS 112.46 / NRRL 194 / M139) (Aspergillus nidulans) protein is Probable methyltransferase tdiE.